The sequence spans 272 residues: Imidazole glycerol phosphate synthase subunit HisF (272 aa).

Active-site residues include aspartate 11 and aspartate 130.

It belongs to the HisA/HisF family. In terms of assembly, heterodimer of HisH and HisF.

The protein resides in the cytoplasm. The enzyme catalyses 5-[(5-phospho-1-deoxy-D-ribulos-1-ylimino)methylamino]-1-(5-phospho-beta-D-ribosyl)imidazole-4-carboxamide + L-glutamine = D-erythro-1-(imidazol-4-yl)glycerol 3-phosphate + 5-amino-1-(5-phospho-beta-D-ribosyl)imidazole-4-carboxamide + L-glutamate + H(+). Its pathway is amino-acid biosynthesis; L-histidine biosynthesis; L-histidine from 5-phospho-alpha-D-ribose 1-diphosphate: step 5/9. Functionally, IGPS catalyzes the conversion of PRFAR and glutamine to IGP, AICAR and glutamate. The HisF subunit catalyzes the cyclization activity that produces IGP and AICAR from PRFAR using the ammonia provided by the HisH subunit. The sequence is that of Imidazole glycerol phosphate synthase subunit HisF from Methanococcus maripaludis (strain C5 / ATCC BAA-1333).